We begin with the raw amino-acid sequence, 169 residues long: Ribosomal RNA large subunit methyltransferase H (169 aa).

S-adenosyl-L-methionine-binding positions include leucine 85, glycine 117, and 136 to 141 (LGELTW).

This sequence belongs to the RNA methyltransferase RlmH family. Homodimer.

The protein resides in the cytoplasm. It catalyses the reaction pseudouridine(1915) in 23S rRNA + S-adenosyl-L-methionine = N(3)-methylpseudouridine(1915) in 23S rRNA + S-adenosyl-L-homocysteine + H(+). Functionally, specifically methylates the pseudouridine at position 1915 (m3Psi1915) in 23S rRNA. The sequence is that of Ribosomal RNA large subunit methyltransferase H from Brucella abortus biovar 1 (strain 9-941).